A 347-amino-acid chain; its full sequence is MTIKVAIAGASGYAGGEILRLLLGHPAYASGELEIGALTAASTAGSTLGELMPHIPQLADRVIQDTTAETLAGHDVVFLGLPHGFSAEIALQLGPDVTVIDCAADFRLQNAADWEKFYGSEHQGTWPYGIPEMPGHREALRGAKRVAVPGCFPTGATLALIPAVQAGLIEPDVSVVSITGVSGGGKKASVALLGSETMGSLKAYNTSGKHRHTPEIAQNLGEVSDKPVKVSFTPVLAPLPRGILTTATAPLKEGVTAEQARAVYEEFYAQETFVHVLPEGAQPQTQAVLGSNMCHVQVEIDEEAGKVLVTSAIDNLTKGTAGAAVQCMNLSVGFDEAAGLPQVGVAP.

Cysteine 151 is an active-site residue.

Belongs to the NAGSA dehydrogenase family. Type 1 subfamily.

The protein resides in the cytoplasm. It carries out the reaction N-acetyl-L-glutamate 5-semialdehyde + phosphate + NADP(+) = N-acetyl-L-glutamyl 5-phosphate + NADPH + H(+). Its pathway is amino-acid biosynthesis; L-arginine biosynthesis; N(2)-acetyl-L-ornithine from L-glutamate: step 3/4. Catalyzes the NADPH-dependent reduction of N-acetyl-5-glutamyl phosphate to yield N-acetyl-L-glutamate 5-semialdehyde. The chain is N-acetyl-gamma-glutamyl-phosphate reductase from Corynebacterium glutamicum (strain R).